The following is a 183-amino-acid chain: Shikimate kinase (183 aa).

25-30 (GAGKTT) is an ATP binding site. Residue Thr29 participates in Mg(2+) binding. Substrate is bound by residues Asp47, Arg71, and Gly93. Position 131 (Arg131) interacts with ATP. Arg150 lines the substrate pocket.

This sequence belongs to the shikimate kinase family. Monomer. The cofactor is Mg(2+).

It is found in the cytoplasm. The catalysed reaction is shikimate + ATP = 3-phosphoshikimate + ADP + H(+). The protein operates within metabolic intermediate biosynthesis; chorismate biosynthesis; chorismate from D-erythrose 4-phosphate and phosphoenolpyruvate: step 5/7. Catalyzes the specific phosphorylation of the 3-hydroxyl group of shikimic acid using ATP as a cosubstrate. In Dechloromonas aromatica (strain RCB), this protein is Shikimate kinase.